The sequence spans 91 residues: Small ribosomal subunit protein uS15 (91 aa).

This sequence belongs to the universal ribosomal protein uS15 family. As to quaternary structure, part of the 30S ribosomal subunit. Forms a bridge to the 50S subunit in the 70S ribosome, contacting the 23S rRNA.

Its function is as follows. One of the primary rRNA binding proteins, it binds directly to 16S rRNA where it helps nucleate assembly of the platform of the 30S subunit by binding and bridging several RNA helices of the 16S rRNA. Functionally, forms an intersubunit bridge (bridge B4) with the 23S rRNA of the 50S subunit in the ribosome. This Rickettsia prowazekii (strain Madrid E) protein is Small ribosomal subunit protein uS15.